A 2531-amino-acid chain; its full sequence is Highly reducing polyketide synthase gloL (2531 aa).

The 421-residue stretch at 15-435 (YEPLAIVGMG…GANAHVILDS (421 aa)) folds into the Ketosynthase family 3 (KS3) domain. Catalysis depends on for beta-ketoacyl synthase activity residues cysteine 187, histidine 322, and histidine 358. Residues 449 to 525 (TNGLSVNGHS…GHSVNGHSKP (77 aa)) form a disordered region. Residues 453–503 (SVNGHSINGNSVNGHSVNGHSTNGHSINGNSVNGHSVNGNSVNGHSTNGHS) show a composition bias toward low complexity. Residues 505–521 (NGHSANGNSINGHSVNG) show a composition bias toward polar residues. The interval 602 to 909 (MVFTGQGAQW…VTALERGKDC (308 aa)) is malonyl-CoA:ACP transacylase (MAT) domain. The interval 971-1099 (HEILGSRTVE…GQIRSGTDNP (129 aa)) is N-terminal hotdog fold. The segment at 971–1251 (HEILGSRTVE…GGQFSPIEED (281 aa)) is dehydratase (DH) domain. In terms of domain architecture, PKS/mFAS DH spans 971-1254 (HEILGSRTVE…FSPIEEDSSD (284 aa)). The active-site Proton acceptor; for dehydratase activity is histidine 1003. Residues 1109 to 1254 (DHPRSVPSPY…FSPIEEDSSD (146 aa)) form a C-terminal hotdog fold region. The Proton donor; for dehydratase activity role is filled by aspartate 1169. Residues 1419-1597 (DFFTAAGHSK…FSGCDATVYD (179 aa)) form a methyltransferase (CMet) domain region. The enoyl reductase (ER) (ER) domain stretch occupies residues 1806–2114 (GLLQTLRWVP…KGSHIGKIVV (309 aa)). The tract at residues 2139 to 2312 (GYLLVGGLGG…ASVVDIGVMG (174 aa)) is ketoreductase (KR) domain. The 93-residue stretch at 2413 to 2505 (MSSVETDSSI…ALGLLTIEGL (93 aa)) folds into the Carrier domain. An O-(pantetheine 4'-phosphoryl)serine modification is found at serine 2464.

It functions in the pathway mycotoxin biosynthesis. In terms of biological role, highly reducing polyketide synthase; part of the gene cluster that mediates the biosynthesis of pneumocandins, lipohexapeptides of the echinocandin family that prevent fungal cell wall formation by non-competitive inhibition of beta-1,3-glucan synthase. The 10,12-dimethylmyristoyl side chain is synthesized by the reducing polyketide synthase gloL/GLPKS4. The thioesterase gloN/GLHYD exclusively interacts with gloL/GLPKS4 to maintain turnover of the polyketide side chain. The 10R,12S-dimethylmyristic acid is then transferred to the first thiolation domain of the nonribosomal peptide synthetase gloA/GLNRPS4 by the acyl-AMP ligase gloD/GLligase, followed by its acylation to L-ornithine to trigger elongation of the cyclic hexapeptide. L-ornithine, 4R-hydroxyl-L-proline (generated from L-proline by the dioxygenase gloF/GLOXY2), 3S-hydroxyl-L-homotyrosine (generated by gloG/GLHtyB, gloH/GLHtyA, gloI/GLHtyC, gloJ/GLHtyD and hydroxylated at C-3 by the dioxygenase gloM/GLOXY1), 3R-hydroxyl-L-glutamine (generated from L-glutamine probably by the dioxygenase gloE/GLOXY3) and 3S-hydroxyl-L-proline (generated from L-proline by the dioxygenase gloF/GLOXY2 to yield pneumocandin B0), or 3S-hydroxyl-4S-methyl-L-proline (generated from L-leucine by the dioxygenase gloC/GLOXY4 to yield pneumocandin A0) are sequentially added to the growing chain. The last C domain of gloA/GLNRPS4 is proposed to be responsible for cyclization by condensation to form the peptide bond between L-ornithine and 3S-hydroxyl-4S-methyl-L-proline (for pneumocandin A0) or 3S-hydroxyl-L-proline (for pneumocandin B0). Finally, the subsequent C-4 hydroxylation of 3S-hydroxyl-L-homotyrosine and L-ornithine dihydroxylation at C-4 and C-5 are performed by the cytochrome P450 monooxygenases gloP/GLP450-1 and gloO/GLP450-2, respectively. This chain is Highly reducing polyketide synthase gloL, found in Glarea lozoyensis (strain ATCC 20868 / MF5171).